We begin with the raw amino-acid sequence, 217 residues long: MTDPNKMIINLALFGMTQSGKSSAGNILLGSTDFHSSFAPCSVTTCCSLGRSCHLHSFMRRGGLEVALQVQVLDTPGYPHSRLSKKYVKQEVKEALAHHFGQGGLHLALLVQRADVPFCGQEVTDPVQMIQELLGHAWMNYTAILFTHAEKIEEAGLTEDKYLHEASDTLKTLLNSIQHKYVFQYKKGKSLNEQRMKILERIMEFIKENCYQVLTFK.

The AIG1-type G domain occupies Lys6–Lys217. GTP-binding positions include Gly15 to Ser23, Ser36, and His148 to Glu150.

The protein belongs to the TRAFAC class TrmE-Era-EngA-EngB-Septin-like GTPase superfamily. AIG1/Toc34/Toc159-like paraseptin GTPase family. IAN subfamily.

The polypeptide is GTPase IMAP family member GIMD1 (GIMD1) (Homo sapiens (Human)).